The primary structure comprises 465 residues: Fumarate hydratase class II (465 aa).

Substrate contacts are provided by residues 99–101 (SGT), Arg127, 130–133 (HPND), 140–142 (STN), and Thr188. Catalysis depends on His189, which acts as the Proton donor/acceptor. Ser319 is a catalytic residue. Substrate is bound by residues Ser320 and 325-327 (KVN).

This sequence belongs to the class-II fumarase/aspartase family. Fumarase subfamily. In terms of assembly, homotetramer.

It localises to the cytoplasm. It catalyses the reaction (S)-malate = fumarate + H2O. The protein operates within carbohydrate metabolism; tricarboxylic acid cycle; (S)-malate from fumarate: step 1/1. In terms of biological role, involved in the TCA cycle. Catalyzes the stereospecific interconversion of fumarate to L-malate. The protein is Fumarate hydratase class II of Parasynechococcus marenigrum (strain WH8102).